The chain runs to 239 residues: Sensory rhodopsin-1 (239 aa).

Topologically, residues 1 to 3 (MDA) are extracellular. The helical transmembrane segment at 4–25 (VATAYLGGAVALIVGVAFVWLL) threads the bilayer. Residues 26–34 (YRSLDGSPH) are Cytoplasmic-facing. A helical membrane pass occupies residues 35 to 56 (QSALAPLAIIPVFAGLSYVGMA). The Extracellular portion of the chain corresponds to 57–70 (YDIGTVIVNGNQIV). A helical membrane pass occupies residues 71–92 (GLRYIDWLVTTPILVGYVGYAA). Over 93–95 (GAS) the chain is Cytoplasmic. A helical membrane pass occupies residues 96–118 (RRSIIGVMVADALMIAVGAGAVV). Residues 119–122 (TDGT) lie on the Extracellular side of the membrane. The helical transmembrane segment at 123–150 (LKWALFGVSSIFHLSLFAYLYVIFPRVV) threads the bilayer. Residues 151–153 (PDV) lie on the Cytoplasmic side of the membrane. The chain crosses the membrane as a helical span at residues 154–181 (PEQIGLFNLLKNHIGLLWLAYPLVWLFG). At 182 to 189 (PAGIGEAT) the chain is on the extracellular side. A helical membrane pass occupies residues 190 to 222 (AAGVALTYVFLDVLAKVPYVYFFYARRRVFMHS). Residue Lys205 is modified to N6-(retinylidene)lysine. Topologically, residues 223–239 (ESPPAPEQATVEATAAD) are cytoplasmic.

It belongs to the archaeal/bacterial/fungal opsin family. In terms of assembly, interacts with HTR-I.

The protein localises to the cell membrane. Involved in the control of phototaxis. Mediates both photoattractant (in the orange light) and photophobic (in the near UV light) responses. The signal is then transmitted to the sensory rhodopsin I transducer (HTR-I). The polypeptide is Sensory rhodopsin-1 (sopI) (Halobacterium salinarum (strain ATCC 29341 / DSM 671 / R1)).